Here is a 431-residue protein sequence, read N- to C-terminus: MSTSSSAVSQLKNSPLAGNINYEPTVWSRADALKVNENDPTTTQPLVSADFPVMSDTVFIWDTMPLRELDGTVVSVNGWSVILTLTADRHPNDPQYLDANGRYDIKRDWEDRHGRARMSYWYSRTGKDWIFGGRVMAEGVSPTTREWAGTPILLNDKGDIDLYYTCVTPGAAIAKVRGRIVTSDQGVELKDFTQVKKLFEADGTYYQTEAQNSSWNFRDPSPFIDPNDGKLYMVFEGNVAGERGSHTVGAAELGPVPPGHEDVGGARFQVGCIGLAVAKDLSGEEWEILPPLVTAVGVNDQTERPHYVFQDGKYYLFTISHKFTYAEGLTGPDGVYGFVGEHLFGPYRPMNASGLVLGNPPEQPFQTYSHCVMPNGLVTSFIDSVPTEGEDYRIGGTEAPTVRILLKGDRSFVQEEYDYGYIPAMKDVTLS.

Tryptophan 61, aspartate 62, alanine 148, arginine 218, and aspartate 219 together coordinate sucrose. Aspartate 62 (nucleophile) is an active-site residue. Glutamate 303 functions as the Proton donor/acceptor in the catalytic mechanism.

This sequence belongs to the glycosyl hydrolase 68 family.

It localises to the secreted. The enzyme catalyses [6)-beta-D-fructofuranosyl-(2-&gt;](n) alpha-D-glucopyranoside + sucrose = [6)-beta-D-fructofuranosyl-(2-&gt;](n+1) alpha-D-glucopyranoside + D-glucose. Its function is as follows. Catalyzes the synthesis of levan, a fructose polymer, by transferring the fructosyl moiety from sucrose to a growing acceptor molecule. The protein is Levansucrase LscB of Pseudomonas savastanoi pv. glycinea (Pseudomonas syringae pv. glycinea).